The following is a 190-amino-acid chain: Threonylcarbamoyl-AMP synthase (190 aa).

One can recognise a YrdC-like domain in the interval R8 to A190.

It belongs to the SUA5 family. TsaC subfamily.

Its subcellular location is the cytoplasm. It catalyses the reaction L-threonine + hydrogencarbonate + ATP = L-threonylcarbamoyladenylate + diphosphate + H2O. In terms of biological role, required for the formation of a threonylcarbamoyl group on adenosine at position 37 (t(6)A37) in tRNAs that read codons beginning with adenine. Catalyzes the conversion of L-threonine, HCO(3)(-)/CO(2) and ATP to give threonylcarbamoyl-AMP (TC-AMP) as the acyladenylate intermediate, with the release of diphosphate. The protein is Threonylcarbamoyl-AMP synthase of Alkalilimnicola ehrlichii (strain ATCC BAA-1101 / DSM 17681 / MLHE-1).